Consider the following 241-residue polypeptide: Queuine tRNA-ribosyltransferase-like protein (241 aa).

The protein belongs to the queuine tRNA-ribosyltransferase family.

The protein is Queuine tRNA-ribosyltransferase-like protein of Plasmodium falciparum.